The chain runs to 131 residues: D-ribose pyranase (131 aa).

Residue histidine 20 is the Proton donor of the active site. Substrate is bound by residues aspartate 28, histidine 98, and tyrosine 120–asparagine 122.

This sequence belongs to the RbsD / FucU family. RbsD subfamily. Homodecamer.

The protein resides in the cytoplasm. The enzyme catalyses beta-D-ribopyranose = beta-D-ribofuranose. It functions in the pathway carbohydrate metabolism; D-ribose degradation; D-ribose 5-phosphate from beta-D-ribopyranose: step 1/2. In terms of biological role, catalyzes the interconversion of beta-pyran and beta-furan forms of D-ribose. This is D-ribose pyranase from Enterococcus faecalis (strain ATCC 700802 / V583).